We begin with the raw amino-acid sequence, 890 residues long: Protein FAM171A1 (890 aa).

An N-terminal signal peptide occupies residues M1–T21. Residues K22 to T303 are Extracellular-facing. N-linked (GlcNAc...) asparagine glycans are attached at residues N190 and N194. A helical membrane pass occupies residues V304–L324. Over L325 to K890 the chain is Cytoplasmic. Phosphoserine occurs at positions 358, 360, 371, 422, 443, and 525. 2 disordered regions span residues A730–A759 and E818–K890. The segment covering N747–G757 has biased composition (basic and acidic residues). Residues R822–E833 show a composition bias toward polar residues. A phosphoserine mark is found at S849 and S855. Positions E858 to G869 are enriched in acidic residues. Basic and acidic residues predominate over residues E870–P883.

It belongs to the FAM171 family. As to quaternary structure, interacts with ADAM10, NSG1 and OAZ1.

The protein resides in the cell membrane. In terms of biological role, involved in the regulation of the cytoskeletal dynamics, plays a role in actin stress fiber formation. This is Protein FAM171A1 (FAM171A1) from Pongo abelii (Sumatran orangutan).